The primary structure comprises 194 residues: MNPFVIHTGVVAPLDRVNVDTDAIIPKQFLKRIERSGFGQFLFYEWRFTVDGAPIDSFILNTPAYKESTVLLARNNFGCGSSREHAPWALLDYGFRCVIAPSFADIFYNNCFKNGILPIKLSEEQVDELFNRAESKPNYQLTIDLQEQVVRDNEGLSYPFEVDSYRRYCLLNGLDDIGITLQYEDKIAAYEARR.

The protein belongs to the LeuD family. LeuD type 1 subfamily. In terms of assembly, heterodimer of LeuC and LeuD.

The enzyme catalyses (2R,3S)-3-isopropylmalate = (2S)-2-isopropylmalate. The protein operates within amino-acid biosynthesis; L-leucine biosynthesis; L-leucine from 3-methyl-2-oxobutanoate: step 2/4. Catalyzes the isomerization between 2-isopropylmalate and 3-isopropylmalate, via the formation of 2-isopropylmaleate. The chain is 3-isopropylmalate dehydratase small subunit from Brevibacillus brevis (strain 47 / JCM 6285 / NBRC 100599).